Reading from the N-terminus, the 436-residue chain is Histone acetyltransferase RTT109 (436 aa).

Residues 2–404 form the Rtt109-type HAT domain; it reads SLNDFLSSVL…LQSLTGKREH (403 aa). Acetyl-CoA contacts are provided by residues 88–90 and 97–101; these read ADT and RVSVR. Positions 128 to 170 are interaction with VPS75; sequence RSYKKISPELISAASTPARTLRILARRLKQSGSTVLKEIESPR. Residues phenylalanine 192, alanine 196, 211–213, and tryptophan 221 contribute to the acetyl-CoA site; that span reads HIL. The active-site Proton donor/acceptor is the aspartate 288. N6-acetyllysine; by autocatalysis is present on lysine 290. The interaction with ASF1 stretch occupies residues 419 to 433; sequence LAITMLKPRKKAKAL.

The protein belongs to the RTT109 family. Forms a complex composed of two RTT109 subunits and one VPS75 homodimer; each RTT109 subunit interacts predominantly with VPS75 instead of interacting with the other RTT109 subunit. Interacts with VPS75; the interaction is direct. Interacts (via C-terminus) with ASF1; the interaction is direct. Interacts with histone H3/H4 heterodimers via histone H3.

The protein localises to the nucleus. It carries out the reaction L-lysyl-[histone] + acetyl-CoA = N(6)-acetyl-L-lysyl-[histone] + CoA + H(+). The catalysed reaction is L-lysyl-[protein] + acetyl-CoA = N(6)-acetyl-L-lysyl-[protein] + CoA + H(+). In terms of biological role, histone chaperone-dependent acetylase that modifies 'Lys-9', 'Lys-14', 'Lys-23', 'Lys-27', and 'Lys-56' on histone H3 (H3K9Ac, H3K14Ac and H3K23Ac, H3K27Ac, and H3K56Ac) to promote nucleosome assembly, genomic stability, DNA repair and transcriptional regulation during mitotic S-phase. Its residue selectivity is influenced by the acetylation status of histone H3, and also the presence of histone chaperone ASF1 that shifts selectivity to 'Lys-56' when H3K14Ac is already present. H3K56 acetylation weakens the interaction between the histone core and the surrounding DNA in the nucleosomal particle and drives chromatin disassembly. Autoacetylates. Independently of acetyltransferase activity, stimulates histone deposition by VPS75. Involved in regulation of Ty1 transposition. This Saccharomyces cerevisiae (strain ATCC 204508 / S288c) (Baker's yeast) protein is Histone acetyltransferase RTT109.